A 166-amino-acid chain; its full sequence is MQSFAFSTRALFLGLFAVCAGLLGFGLYLQHAVGLEPCPMCIMQRYAFVAIALTALVAGLHGPGRRGTRAYAAVILLLALAGGGVALRQTWMQLYPPEFAECGPDLEFMLGSFPLADALPMIFQGAGDCSKVDWAFLGLSIANWSLVCLTLVAVFAIMMIARKRGG.

Topologically, residues 1 to 11 (MQSFAFSTRAL) are cytoplasmic. A helical transmembrane segment spans residues 12–28 (FLGLFAVCAGLLGFGLY). The Periplasmic segment spans residues 29–46 (LQHAVGLEPCPMCIMQRY). Cysteine 38 and cysteine 41 are disulfide-bonded. A helical membrane pass occupies residues 47–63 (AFVAIALTALVAGLHGP). The Cytoplasmic segment spans residues 64 to 70 (GRRGTRA). The chain crosses the membrane as a helical span at residues 71-87 (YAAVILLLALAGGGVAL). Residues 88–143 (RQTWMQLYPPEFAECGPDLEFMLGSFPLADALPMIFQGAGDCSKVDWAFLGLSIAN) are Periplasmic-facing. A disulfide bridge connects residues cysteine 102 and cysteine 129. A helical transmembrane segment spans residues 144–162 (WSLVCLTLVAVFAIMMIAR). The Cytoplasmic segment spans residues 163–166 (KRGG).

It belongs to the DsbB family.

Its subcellular location is the cell inner membrane. Its function is as follows. Required for disulfide bond formation in some periplasmic proteins. Acts by oxidizing the DsbA protein. In Aromatoleum aromaticum (strain DSM 19018 / LMG 30748 / EbN1) (Azoarcus sp. (strain EbN1)), this protein is Disulfide bond formation protein B.